The sequence spans 416 residues: Enolase (416 aa).

Q160 provides a ligand contact to (2R)-2-phosphoglycerate. Catalysis depends on E204, which acts as the Proton donor. D239, E280, and D306 together coordinate Mg(2+). Residues K331, R360, S361, and K382 each contribute to the (2R)-2-phosphoglycerate site. The Proton acceptor role is filled by K331.

The protein belongs to the enolase family. Requires Mg(2+) as cofactor.

It is found in the cytoplasm. The protein resides in the secreted. The protein localises to the cell surface. It carries out the reaction (2R)-2-phosphoglycerate = phosphoenolpyruvate + H2O. Its pathway is carbohydrate degradation; glycolysis; pyruvate from D-glyceraldehyde 3-phosphate: step 4/5. In terms of biological role, catalyzes the reversible conversion of 2-phosphoglycerate (2-PG) into phosphoenolpyruvate (PEP). It is essential for the degradation of carbohydrates via glycolysis. In Sulfurisphaera tokodaii (strain DSM 16993 / JCM 10545 / NBRC 100140 / 7) (Sulfolobus tokodaii), this protein is Enolase.